The following is a 356-amino-acid chain: Guanine nucleotide-binding protein alpha-3 subunit (356 aa).

The tract at residues 1–26 (MGACMSKNDEETEQKKRSQKIDRDLE) is disordered. Gly2 carries the N-myristoyl glycine lipid modification. Cys4 is lipidated: S-palmitoyl cysteine. Over residues 7–23 (KNDEETEQKKRSQKIDR) the composition is skewed to basic and acidic residues. The G-alpha domain maps to 34-356 (KECKILLLGS…NNALKDSGIL (323 aa)). The interval 37 to 50 (KILLLGSGESGKST) is G1 motif. Residues 42-49 (GSGESGKS), 179-185 (LRARTKT), 204-208 (DVGGQ), 273-276 (NKVD), and Ala328 contribute to the GTP site. Ser49 and Thr185 together coordinate Mg(2+). Positions 177 to 185 (DVLRARTKT) are G2 motif. The G3 motif stretch occupies residues 200 to 209 (IHMFDVGGQR). The G4 motif stretch occupies residues 269–276 (ILFLNKVD). A G5 motif region spans residues 326-331 (TQATDT).

Belongs to the G-alpha family. G(q) subfamily. In terms of assembly, g proteins are composed of 3 units; alpha, beta and gamma. The alpha chain contains the guanine nucleotide binding site.

Its function is as follows. Guanine nucleotide-binding proteins (G proteins) are involved as modulators or transducers in various transmembrane signaling systems. Involved in conidiation. The sequence is that of Guanine nucleotide-binding protein alpha-3 subunit (gna-3) from Neurospora crassa (strain ATCC 24698 / 74-OR23-1A / CBS 708.71 / DSM 1257 / FGSC 987).